A 101-amino-acid chain; its full sequence is NADH-quinone oxidoreductase subunit K (101 aa).

3 helical membrane-spanning segments follow: residues 4–24 (LSHYLVLGAILFAISVVGIFL), 30–50 (IVLLMAIELMLLAVNLNFIAF), and 61–81 (IFVFFILTVAAAESAIGLAIL).

This sequence belongs to the complex I subunit 4L family. NDH-1 is composed of 14 different subunits. Subunits NuoA, H, J, K, L, M, N constitute the membrane sector of the complex.

The protein resides in the cell inner membrane. The enzyme catalyses a quinone + NADH + 5 H(+)(in) = a quinol + NAD(+) + 4 H(+)(out). In terms of biological role, NDH-1 shuttles electrons from NADH, via FMN and iron-sulfur (Fe-S) centers, to quinones in the respiratory chain. The immediate electron acceptor for the enzyme in this species is believed to be ubiquinone. Couples the redox reaction to proton translocation (for every two electrons transferred, four hydrogen ions are translocated across the cytoplasmic membrane), and thus conserves the redox energy in a proton gradient. This chain is NADH-quinone oxidoreductase subunit K, found in Aromatoleum aromaticum (strain DSM 19018 / LMG 30748 / EbN1) (Azoarcus sp. (strain EbN1)).